The sequence spans 439 residues: 23S rRNA (uracil(1939)-C(5))-methyltransferase RlmD (439 aa).

Residues 10–69 (KTQLNTRHQAVQVERLDHHGAGIAYLKKKPLFIDGALPGEEVVTQLVEEKSKFARGKLIK) form the TRAM domain. [4Fe-4S] cluster contacts are provided by Cys82, Cys88, Cys91, and Cys169. S-adenosyl-L-methionine contacts are provided by Gln272, Phe301, Asn306, Glu322, Asn349, and Asp370. Cys396 serves as the catalytic Nucleophile.

This sequence belongs to the class I-like SAM-binding methyltransferase superfamily. RNA M5U methyltransferase family. RlmD subfamily.

It carries out the reaction uridine(1939) in 23S rRNA + S-adenosyl-L-methionine = 5-methyluridine(1939) in 23S rRNA + S-adenosyl-L-homocysteine + H(+). Functionally, catalyzes the formation of 5-methyl-uridine at position 1939 (m5U1939) in 23S rRNA. This Vibrio parahaemolyticus serotype O3:K6 (strain RIMD 2210633) protein is 23S rRNA (uracil(1939)-C(5))-methyltransferase RlmD.